The primary structure comprises 432 residues: DnaJ-like protein 1 (432 aa).

In terms of domain architecture, J spans 4-73 (DTEYYDLLGV…RAKYDKYGRK (70 aa)). Positions 117 to 187 (NAEDEAEKEK…KKNEQVGAEA (71 aa)) are disordered.

Belongs to the DnaJ family. As to quaternary structure, interacts with SLN1.

The protein localises to the cytoplasm. Required for peroxisomal protein import which maintains the function of peroxisomes. In Saccharomyces cerevisiae (strain ATCC 204508 / S288c) (Baker's yeast), this protein is DnaJ-like protein 1 (DJP1).